Here is a 381-residue protein sequence, read N- to C-terminus: tRNA pseudouridine synthase D (381 aa).

Residue D81 is the Nucleophile of the active site. Residues 160–335 (GMPNYFGSQR…TLGSRRFFWV (176 aa)) enclose the TRUD domain.

Belongs to the pseudouridine synthase TruD family.

The catalysed reaction is uridine(13) in tRNA = pseudouridine(13) in tRNA. Its function is as follows. Responsible for synthesis of pseudouridine from uracil-13 in transfer RNAs. The protein is tRNA pseudouridine synthase D of Helicobacter pylori (strain ATCC 700392 / 26695) (Campylobacter pylori).